Reading from the N-terminus, the 40-residue chain is Photosystem II reaction center protein J (40 aa).

A helical transmembrane segment spans residues 8–28 (IPLWLIGTVTGIPVIGSIGIF).

Belongs to the PsbJ family. As to quaternary structure, PSII is composed of 1 copy each of membrane proteins PsbA, PsbB, PsbC, PsbD, PsbE, PsbF, PsbH, PsbI, PsbJ, PsbK, PsbL, PsbM, PsbT, PsbX, PsbY, PsbZ, Psb30/Ycf12, at least 3 peripheral proteins of the oxygen-evolving complex and a large number of cofactors. It forms dimeric complexes.

The protein resides in the plastid. It is found in the chloroplast thylakoid membrane. Its function is as follows. One of the components of the core complex of photosystem II (PSII). PSII is a light-driven water:plastoquinone oxidoreductase that uses light energy to abstract electrons from H(2)O, generating O(2) and a proton gradient subsequently used for ATP formation. It consists of a core antenna complex that captures photons, and an electron transfer chain that converts photonic excitation into a charge separation. This is Photosystem II reaction center protein J from Chloranthus spicatus (Chulantree).